The following is a 491-amino-acid chain: Proline-rich protein PRCC (491 aa).

A mediates interaction with MAD2L2 region spans residues 1-100; the sequence is MSLVAYASSD…PPPPGVSPAE (100 aa). 3 disordered regions span residues 1-244, 260-313, and 432-454; these read MSLV…SPSA, ITQE…PAFQ, and EEKT…QRRK. Acidic residues predominate over residues 10–26; it reads DESEPDEAEPEPEEEEA. Residues 40–49 are compositionally biased toward low complexity; the sequence is ASLPAPKGPA. Residues 50-96 show a composition bias toward pro residues; that stretch reads LLPPPPQMLAPAFPPPLLLPPPTGDPRLQPPPPLPFGLGGFPPPPGV. A phosphoserine mark is found at S97, S114, S157, S159, S212, and S218. Positions 111-120 are enriched in low complexity; that stretch reads GLPSPRGPGL. Low complexity predominate over residues 230-244; it reads APVVGTTTTTPSPSA. T239 is subject to Phosphothreonine. A phosphoserine mark is found at S241 and S267. Over residues 262–272 the composition is skewed to acidic residues; the sequence is QEEDDSDEEVA. Positions 287–307 are enriched in pro residues; that stretch reads GVEPYPYPIPTVPEELPPGTE.

As to quaternary structure, interacts with MAD2L2; the interaction is direct. As to expression, ubiquitous in fetal and adult tissues.

It is found in the nucleus. Functionally, may regulate cell cycle progression through interaction with MAD2L2. In Homo sapiens (Human), this protein is Proline-rich protein PRCC (PRCC).